Consider the following 280-residue polypeptide: MKSLTLKAPAKVNYLLDVIRRRPDGYHDLRMVMQRVNLCDEIAIALTDSPELSVCCGKDGVPDGPGNIAWKAARAMLDLAAGGQGATISIVKNIPVAAGLGGGSSDAATVLMGMNQLLELGLTDQELMRIGVKLGADVPFFIFKKTALAEGIGEQLRAMPPMPALWVLLVNPGVHVSTAWVYKNLRLTSRGELAKLPQFFSTVEDVCSMLSNDLESVTIPAFPVIADIKRAMLAKGALGAMMSGSGPTVFGLFRDREGAEAARAELVEGSGWFAAVAETL.

The active site involves Lys11. 95–105 contacts ATP; the sequence is PVAAGLGGGSS. Asp137 is an active-site residue.

This sequence belongs to the GHMP kinase family. IspE subfamily.

It carries out the reaction 4-CDP-2-C-methyl-D-erythritol + ATP = 4-CDP-2-C-methyl-D-erythritol 2-phosphate + ADP + H(+). Its pathway is isoprenoid biosynthesis; isopentenyl diphosphate biosynthesis via DXP pathway; isopentenyl diphosphate from 1-deoxy-D-xylulose 5-phosphate: step 3/6. In terms of biological role, catalyzes the phosphorylation of the position 2 hydroxy group of 4-diphosphocytidyl-2C-methyl-D-erythritol. This Pelobacter propionicus (strain DSM 2379 / NBRC 103807 / OttBd1) protein is 4-diphosphocytidyl-2-C-methyl-D-erythritol kinase.